A 343-amino-acid chain; its full sequence is Heat-inducible transcription repressor HrcA (343 aa).

It belongs to the HrcA family.

Negative regulator of class I heat shock genes (grpE-dnaK-dnaJ and groELS operons). Prevents heat-shock induction of these operons. The protein is Heat-inducible transcription repressor HrcA of Clostridium acetobutylicum (strain ATCC 824 / DSM 792 / JCM 1419 / IAM 19013 / LMG 5710 / NBRC 13948 / NRRL B-527 / VKM B-1787 / 2291 / W).